A 173-amino-acid chain; its full sequence is Ribosome maturation factor RimM (173 aa).

The region spanning 94 to 173 (EGEFYWRDLI…TIEVDWDPGF (80 aa)) is the PRC barrel domain.

It belongs to the RimM family. As to quaternary structure, binds ribosomal protein uS19.

The protein resides in the cytoplasm. In terms of biological role, an accessory protein needed during the final step in the assembly of 30S ribosomal subunit, possibly for assembly of the head region. Essential for efficient processing of 16S rRNA. May be needed both before and after RbfA during the maturation of 16S rRNA. It has affinity for free ribosomal 30S subunits but not for 70S ribosomes. This Aeromonas salmonicida (strain A449) protein is Ribosome maturation factor RimM.